Here is a 387-residue protein sequence, read N- to C-terminus: Phosphoglycerate kinase (387 aa).

Substrate-binding positions include 21–23 (DLN), arginine 36, 59–62 (HLGR), arginine 113, and arginine 146. ATP-binding positions include lysine 197, glutamate 314, and 340–343 (GGDT).

The protein belongs to the phosphoglycerate kinase family. In terms of assembly, monomer.

The protein resides in the cytoplasm. It carries out the reaction (2R)-3-phosphoglycerate + ATP = (2R)-3-phospho-glyceroyl phosphate + ADP. It functions in the pathway carbohydrate degradation; glycolysis; pyruvate from D-glyceraldehyde 3-phosphate: step 2/5. This Pasteurella multocida (strain Pm70) protein is Phosphoglycerate kinase (pgk).